Reading from the N-terminus, the 359-residue chain is Peptide chain release factor 1 (359 aa).

Glutamine 236 carries the post-translational modification N5-methylglutamine.

This sequence belongs to the prokaryotic/mitochondrial release factor family. In terms of processing, methylated by PrmC. Methylation increases the termination efficiency of RF1.

It is found in the cytoplasm. Functionally, peptide chain release factor 1 directs the termination of translation in response to the peptide chain termination codons UAG and UAA. This chain is Peptide chain release factor 1, found in Streptococcus pyogenes serotype M3 (strain ATCC BAA-595 / MGAS315).